The chain runs to 430 residues: CinA-like protein (430 aa).

The protein belongs to the CinA family.

The polypeptide is CinA-like protein (Prochlorococcus marinus (strain NATL2A)).